The primary structure comprises 190 residues: Large ribosomal subunit protein bL17 (190 aa).

Low complexity predominate over residues 135-165 (AKAAPAAEEAPAEEAPAAEEAATEEAPAAEE). The segment at 135–190 (AKAAPAAEEAPAEEAPAAEEAATEEAPAAEETATEEAAAEEAPAAEEAPAEEKDAK) is disordered.

Belongs to the bacterial ribosomal protein bL17 family. As to quaternary structure, part of the 50S ribosomal subunit. Contacts protein L32.

The chain is Large ribosomal subunit protein bL17 from Pseudarthrobacter chlorophenolicus (strain ATCC 700700 / DSM 12829 / CIP 107037 / JCM 12360 / KCTC 9906 / NCIMB 13794 / A6) (Arthrobacter chlorophenolicus).